The following is a 2581-amino-acid chain: Chromodomain-helicase-DNA-binding protein 8 (2581 aa).

Disordered regions lie at residues 22–114 (DDSF…QTST), 253–281 (VKGSAPAGNPGATGPPLKPAVTLTSTPAQ), and 349–375 (QKIQIVPQPPSSQPQPQPPPSAQPLTL). 2 stretches are compositionally biased toward polar residues: residues 42 to 64 (SLDSLDQMNQDGGSGDVGNSSAS) and 94 to 114 (DYTTQPTSQEQPAQPVLQTST). Positions 255 to 267 (GSAPAGNPGATGP) are enriched in low complexity. The span at 355–370 (PQPPSSQPQPQPPPSA) shows a compositional bias: pro residues. At serine 432 the chain carries Phosphoserine. Disordered stretches follow at residues 473 to 584 (RARG…KRKK) and 596 to 616 (DEEEEEVDVTGPIKPEPILPE). A compositionally biased stretch (basic and acidic residues) spans 493 to 516 (RPEEEGEKKRRKKSSGERLKEEKP). A phosphoserine mark is found at serine 553 and serine 562. The span at 572–584 (QKRRSNRQVKRKK) shows a compositional bias: basic residues. Residue lysine 609 forms a Glycyl lysine isopeptide (Lys-Gly) (interchain with G-Cter in SUMO) linkage. Chromo domains follow at residues 642–709 (AIVD…AQMR) and 724–790 (VEVD…RVNR). The Helicase ATP-binding domain occupies 823–997 (LFNWYNRQNC…FSLLHFLEPS (175 aa)). 836–843 (DEMGLGKT) serves as a coordination point for ATP. The DEAH box motif lies at 948 to 951 (DEAH). In terms of domain architecture, Helicase C-terminal spans 1137-1288 (LIDKLLPKLK…KAVLQSMSGR (152 aa)). A phosphoserine mark is found at serine 1420 and serine 1424. The disordered stretch occupies residues 1692–1713 (EDPEYKPLQGPPKDPDDEGDPL). The interval 1789 to 2302 (IARREKQQRW…LVELEVECME (514 aa)) is interaction with FAM124B. Phosphoserine is present on residues serine 1976 and serine 1978. Residues 1988–2016 (QCTSRTASPSPLRPDVPAEKSPEENAVQV) form a disordered region. Threonine 1993 is subject to Phosphothreonine. Phosphoserine occurs at positions 1995, 1997, and 2008. A Glycyl lysine isopeptide (Lys-Gly) (interchain with G-Cter in SUMO2) cross-link involves residue lysine 2025. Disordered regions lie at residues 2047–2118 (SSDT…YDEE) and 2179–2221 (NRRS…SSSA). Positions 2063 to 2072 (EDDDDSDSEL) are enriched in acidic residues. Serine 2068 and serine 2070 each carry phosphoserine. Residues 2075–2094 (SKLSPSSSSSSSSSSSSSSS) show a composition bias toward low complexity. The span at 2102 to 2116 (EEKLTADRSRPKLYD) shows a compositional bias: basic and acidic residues. Serine 2182, serine 2200, and serine 2202 each carry phosphoserine. Threonine 2204 is subject to Phosphothreonine. The residue at position 2211 (serine 2211) is a Phosphoserine. Threonine 2215 bears the Phosphothreonine mark. The residue at position 2223 (serine 2223) is a Phosphoserine. Lysine 2256 is covalently cross-linked (Glycyl lysine isopeptide (Lys-Gly) (interchain with G-Cter in SUMO2)). Positions 2484 to 2581 (PHVDSSTMLH…NSDSSDDADD (98 aa)) are disordered. The span at 2492 to 2510 (LHHHHHHPHPHHHHHHHPG) shows a compositional bias: basic residues. Low complexity predominate over residues 2513–2528 (TTGYPSSPATTTSGTA). Serine 2519 bears the Phosphoserine mark. Positions 2537–2550 (EDDDEEEDEDDDDL) are enriched in acidic residues. Positions 2565 to 2574 (DDPMMPANSD) are enriched in low complexity.

This sequence belongs to the SNF2/RAD54 helicase family. CHD8 subfamily. In terms of assembly, interacts with p53/TP53, histone H1 and CTCF. Component of some MLL1/MLL complex, at least composed of the core components KMT2A/MLL1, ASH2L, HCFC1/HCF1, WDR5 and RBBP5, as well as the facultative components BACC1, CHD8, E2F6, HSP70, INO80C, KANSL1, LAS1L, MAX, MCRS1, MGA, KAT8/MOF, PELP1, PHF20, PRP31, RING2, RUVB1/TIP49A, RUVB2/TIP49B, SENP3, TAF1, TAF4, TAF6, TAF7, TAF9 and TEX10. Interacts with CHD7. Interacts with FAM124B. Interacts with CTNNB1. Interacts with PIAS3. Interacts with TLK2. Interacts with HNRNPL in an RNA-dependent manner. Post-translationally, sumoylated.

It localises to the nucleus. The enzyme catalyses ATP + H2O = ADP + phosphate + H(+). Functionally, ATP-dependent chromatin-remodeling factor, it slides nucleosomes along DNA; nucleosome sliding requires ATP. Acts as a transcription repressor by remodeling chromatin structure and recruiting histone H1 to target genes. Suppresses p53/TP53-mediated apoptosis by recruiting histone H1 and preventing p53/TP53 transactivation activity. Acts as a negative regulator of Wnt signaling pathway by regulating beta-catenin (CTNNB1) activity. Negatively regulates CTNNB1-targeted gene expression by being recruited specifically to the promoter regions of several CTNNB1 responsive genes. Involved in both enhancer blocking and epigenetic remodeling at chromatin boundary via its interaction with CTCF. Acts as a suppressor of STAT3 activity by suppressing the LIF-induced STAT3 transcriptional activity. Also acts as a transcription activator via its interaction with ZNF143 by participating in efficient U6 RNA polymerase III transcription. Regulates alternative splicing of a core group of genes involved in neuronal differentiation, cell cycle and DNA repair. Enables H3K36me3-coupled transcription elongation and co-transcriptional RNA processing likely via interaction with HNRNPL. This is Chromodomain-helicase-DNA-binding protein 8 from Rattus norvegicus (Rat).